The following is a 188-amino-acid chain: D-glycero-beta-D-manno-heptose-1,7-bisphosphate 7-phosphatase (188 aa).

Aspartate 11 acts as the Nucleophile in catalysis. Mg(2+) is bound by residues aspartate 11 and aspartate 13. Residues 11–13, 19–22, and 53–56 each bind substrate; these read DRD, DHGY, and TNQS. Catalysis depends on aspartate 13, which acts as the Proton donor. Residues cysteine 92, histidine 94, cysteine 107, and cysteine 109 each contribute to the Zn(2+) site. 110–111 provides a ligand contact to substrate; sequence RK. Positions 136 and 137 each coordinate Mg(2+). Lysine 137 lines the substrate pocket.

This sequence belongs to the GmhB family. In terms of assembly, monomer. Mg(2+) serves as cofactor. Zn(2+) is required as a cofactor.

It is found in the cytoplasm. It carries out the reaction D-glycero-beta-D-manno-heptose 1,7-bisphosphate + H2O = D-glycero-beta-D-manno-heptose 1-phosphate + phosphate. The protein operates within nucleotide-sugar biosynthesis; ADP-L-glycero-beta-D-manno-heptose biosynthesis; ADP-L-glycero-beta-D-manno-heptose from D-glycero-beta-D-manno-heptose 7-phosphate: step 2/4. It participates in bacterial outer membrane biogenesis; LPS core biosynthesis. Its function is as follows. Converts the D-glycero-beta-D-manno-heptose 1,7-bisphosphate intermediate into D-glycero-beta-D-manno-heptose 1-phosphate by removing the phosphate group at the C-7 position in vitro. Also catalyzes the dephosphorylation of D-glycero-alpha-D-manno-heptose 1,7-bisphosphate and 2-deoxy-D-manno-2-octoulosonate-8-phosphate in vitro. The chain is D-glycero-beta-D-manno-heptose-1,7-bisphosphate 7-phosphatase (gmhB) from Salmonella typhi.